The primary structure comprises 1388 residues: Dicer-like protein 2 (1388 aa).

The Helicase ATP-binding domain occupies 23–203 (MLEASMKENI…LLTVESNLDA (181 aa)). 36–43 (MDTGSGKT) contacts ATP. The short motif at 144 to 147 (DEAH) is the DEAH box element. A Helicase C-terminal domain is found at 371 to 537 (SLLNFLDSLD…DDERQLQSVS (167 aa)). The 95-residue stretch at 564 to 658 (AMAHLHHFCA…LPLTKRPELK (95 aa)) folds into the Dicer dsRNA-binding fold domain. 2 consecutive RNase III domains span residues 919-1059 (ATRL…MDGG) and 1098-1281 (NERL…VDSG). The Mg(2+) site is built by glutamate 1137, aspartate 1267, and glutamate 1270.

It belongs to the helicase family. Dicer subfamily. Mg(2+) is required as a cofactor. Mn(2+) serves as cofactor.

In terms of biological role, dicer-like endonuclease involved in cleaving double-stranded RNA in the RNA interference (RNAi) pathway. Produces 21 to 25 bp dsRNAs (siRNAs) which target the selective destruction of homologous RNAs leading to sequence-specific suppression of gene expression, called post-transcriptional gene silencing (PTGS). Part of a broad host defense response against viral infection and transposons. The polypeptide is Dicer-like protein 2 (dcl2) (Neosartorya fischeri (strain ATCC 1020 / DSM 3700 / CBS 544.65 / FGSC A1164 / JCM 1740 / NRRL 181 / WB 181) (Aspergillus fischerianus)).